Here is a 196-residue protein sequence, read N- to C-terminus: Potassium-transporting ATPase KdpC subunit (196 aa).

The chain crosses the membrane as a helical span at residues Leu17–Val37. Residues Gln73–Leu93 are disordered.

The protein belongs to the KdpC family. The system is composed of three essential subunits: KdpA, KdpB and KdpC.

Its subcellular location is the cell membrane. In terms of biological role, part of the high-affinity ATP-driven potassium transport (or Kdp) system, which catalyzes the hydrolysis of ATP coupled with the electrogenic transport of potassium into the cytoplasm. This subunit acts as a catalytic chaperone that increases the ATP-binding affinity of the ATP-hydrolyzing subunit KdpB by the formation of a transient KdpB/KdpC/ATP ternary complex. The polypeptide is Potassium-transporting ATPase KdpC subunit (Kineococcus radiotolerans (strain ATCC BAA-149 / DSM 14245 / SRS30216)).